Consider the following 153-residue polypeptide: Vasotocin-neurophysin VT 1 (153 aa).

Residues 1–20 (MPYSTFPLLWVLGLLALSSA) form the signal peptide. Residues Cys-21 and Cys-26 are joined by a disulfide bond. Gly-29 bears the Glycine amide mark. Disulfide bonds link Cys-41/Cys-85, Cys-44/Cys-58, Cys-52/Cys-75, Cys-59/Cys-65, Cys-92/Cys-104, Cys-98/Cys-116, and Cys-105/Cys-110.

It belongs to the vasopressin/oxytocin family. In terms of processing, seven disulfide bonds are present in neurophysin.

The protein resides in the secreted. Functionally, vasotocin is an antidiuretic hormone. This Oncorhynchus keta (Chum salmon) protein is Vasotocin-neurophysin VT 1.